Reading from the N-terminus, the 377-residue chain is Chaperone protein DnaJ (377 aa).

The J domain occupies 5 to 69 (EYYDRLGLSK…QKRAAYDQYG (65 aa)). The CR-type zinc finger occupies 133–215 (GAEKEIHYNR…CHGTGREKQS (83 aa)). Zn(2+)-binding residues include Cys146, Cys149, Cys163, Cys166, Cys189, Cys192, Cys203, and Cys206. CXXCXGXG motif repeat units follow at residues 146 to 153 (CKTCSGSG), 163 to 170 (CGRCHGHG), 189 to 196 (CDVCHGTG), and 203 to 210 (CQTCHGTG).

This sequence belongs to the DnaJ family. Homodimer. Zn(2+) serves as cofactor.

It is found in the cytoplasm. In terms of biological role, participates actively in the response to hyperosmotic and heat shock by preventing the aggregation of stress-denatured proteins and by disaggregating proteins, also in an autonomous, DnaK-independent fashion. Unfolded proteins bind initially to DnaJ; upon interaction with the DnaJ-bound protein, DnaK hydrolyzes its bound ATP, resulting in the formation of a stable complex. GrpE releases ADP from DnaK; ATP binding to DnaK triggers the release of the substrate protein, thus completing the reaction cycle. Several rounds of ATP-dependent interactions between DnaJ, DnaK and GrpE are required for fully efficient folding. Also involved, together with DnaK and GrpE, in the DNA replication of plasmids through activation of initiation proteins. In Streptococcus thermophilus (strain CNRZ 1066), this protein is Chaperone protein DnaJ.